Here is a 142-residue protein sequence, read N- to C-terminus: MNTIKQSFSTSKLEGYTKQLPSPAPGICLPAGKVVPHTTFEVIEKYNVLDDIIKPLSNQPIFEGPSGVKWFDIKEKENEHREYRIYFIKENSIYSFDTKSKQTRSSQVDARLFSVMVTSKPLFIADIGIGVGMPQMKKILKM.

Residues 1–142 (MNTIKQSFST…MPQMKKILKM (142 aa)) form the Sema domain.

This sequence belongs to the semaphorin family.

The sequence is that of Semaphorin-like protein VACWR164 from Bos taurus (Bovine).